The primary structure comprises 43 residues: Potassium channel toxin gamma-KTx 4.5 (43 aa).

4 cysteine pairs are disulfide-bonded: Cys-5–Cys-23, Cys-11–Cys-34, Cys-20–Cys-39, and Cys-24–Cys-41.

It belongs to the ergtoxin family. Gamma-KTx 4 subfamily. In terms of tissue distribution, expressed by the venom gland.

It is found in the secreted. Functionally, reversibly blocks Kv11/ERG potassium channels. The protein is Potassium channel toxin gamma-KTx 4.5 of Centruroides exilicauda (Bark scorpion).